Consider the following 786-residue polypeptide: Constitutive coactivator of peroxisome proliferator-activated receptor gamma (786 aa).

The interval 1–561 (MGVRGLQGFV…GTPSLEVLWL (561 aa)) is mediates transactivation of PPARG. 2 disordered regions span residues 371–413 (PNQE…KLPS) and 738–786 (HWDS…WRRY). Polar residues predominate over residues 750 to 771 (QGYSSYRTDSTHGHSGQSWRNQ).

Belongs to the constitutive coactivator of PPAR-gamma family. Interacts with ESR1 and RXRA. Interacts with PPARG; in a ligand-independent manner. Ubiquitously expressed (at protein level).

It is found in the nucleus. In terms of biological role, functions as a transactivator of PPARG and ESR1. Functions in adipogenesis through PPARG activation. The protein is Constitutive coactivator of peroxisome proliferator-activated receptor gamma (Fam120b) of Mus musculus (Mouse).